A 130-amino-acid chain; its full sequence is DNA-directed RNA polymerase subunit omega (130 aa).

The segment at 110-130 (EELLKGLEGLAPPEEQPEEEE) is disordered.

The protein belongs to the RNA polymerase subunit omega family. As to quaternary structure, the RNAP catalytic core consists of 2 alpha, 1 beta, 1 beta' and 1 omega subunit. When a sigma factor is associated with the core the holoenzyme is formed, which can initiate transcription.

It carries out the reaction RNA(n) + a ribonucleoside 5'-triphosphate = RNA(n+1) + diphosphate. Promotes RNA polymerase assembly. Latches the N- and C-terminal regions of the beta' subunit thereby facilitating its interaction with the beta and alpha subunits. This Afipia carboxidovorans (strain ATCC 49405 / DSM 1227 / KCTC 32145 / OM5) (Oligotropha carboxidovorans) protein is DNA-directed RNA polymerase subunit omega.